A 748-amino-acid polypeptide reads, in one-letter code: Cytosolic phospholipase A2 (748 aa).

A phospholipid binding region spans residues 1 to 178 (MSFIDPYQHI…MKKLLGPKKS (178 aa)). At serine 2 the chain carries Phosphoserine. The 117-residue stretch at 6–122 (PYQHIIVEHQ…KVGEKKEVPF (117 aa)) folds into the C2 domain. The Ca(2+) site is built by aspartate 40, threonine 41, aspartate 43, asparagine 65, aspartate 93, alanine 94, and asparagine 95. One can recognise a PLA2c domain in the interval 140–739 (SCPDLRFSMA…SNVEARKFFN (600 aa)). The active-site Nucleophile is serine 228. The residue at position 268 (threonine 268) is a Phosphothreonine. The segment at 427–458 (KHIVSNDSSDSDDEAQGPKGTENEEAEKEYQS) is disordered. A phosphoserine mark is found at serine 434, serine 435, and serine 437. The residue at position 505 (serine 505) is a Phosphoserine; by MAPK. Serine 515 bears the Phosphoserine mark. Lysine 540 is covalently cross-linked (Glycyl lysine isopeptide (Lys-Gly) (interchain with G-Cter in SUMO2)). Aspartate 548 acts as the Proton acceptor in catalysis. Lysine 605 participates in a covalent cross-link: Glycyl lysine isopeptide (Lys-Gly) (interchain with G-Cter in SUMO2). Serine 726 and serine 728 each carry phosphoserine.

As to quaternary structure, interacts with KAT5. Post-translationally, phosphorylated at both Ser-505 and Ser-726 in response to mitogenic stimuli. In terms of tissue distribution, expressed in various organs including uterus, kidney, spleen, liver, heart, lung and brain (at protein level).

The protein localises to the cytoplasm. It localises to the golgi apparatus membrane. Its subcellular location is the nucleus envelope. The catalysed reaction is a 1,2-diacyl-sn-glycero-3-phosphocholine + H2O = a 1-acyl-sn-glycero-3-phosphocholine + a fatty acid + H(+). The enzyme catalyses a 1-O-alkyl-2-acyl-sn-glycero-3-phosphocholine + H2O = a 1-O-alkyl-sn-glycero-3-phosphocholine + a fatty acid + H(+). It catalyses the reaction a 1-acyl-sn-glycero-3-phosphocholine + H2O = sn-glycerol 3-phosphocholine + a fatty acid + H(+). It carries out the reaction 1-hexadecanoyl-2-(5Z,8Z,11Z,14Z-eicosatetraenoyl)-sn-glycero-3-phosphocholine + H2O = 1-hexadecanoyl-sn-glycero-3-phosphocholine + (5Z,8Z,11Z,14Z)-eicosatetraenoate + H(+). The catalysed reaction is 1,2-di-(5Z,8Z,11Z,14Z-eicosatetraenoyl)-sn-glycero-3-phosphocholine + H2O = 1-(5Z,8Z,11Z,14Z-eicosatetraenoyl)-sn-glycero-3-phosphocholine + (5Z,8Z,11Z,14Z)-eicosatetraenoate + H(+). The enzyme catalyses 1-octadecanoyl-2-(5Z,8Z,11Z,14Z-eicosatetraenoyl)-sn-glycero-3-phosphocholine + H2O = 1-octadecanoyl-sn-glycero-3-phosphocholine + (5Z,8Z,11Z,14Z)-eicosatetraenoate + H(+). It catalyses the reaction 1-hexadecanoyl-2-(9Z,12Z-octadecadienoyl)-sn-glycero-3-phosphocholine + H2O = (9Z,12Z)-octadecadienoate + 1-hexadecanoyl-sn-glycero-3-phosphocholine + H(+). It carries out the reaction 1-octadecanoyl-2-(9Z,12Z,15Z-octadecatrienoyl)-sn-glycero-3-phosphocholine + H2O = (9Z,12Z,15Z)-octadecatrienoate + 1-octadecanoyl-sn-glycero-3-phosphocholine + H(+). The catalysed reaction is 1-(5Z,8Z,11Z,14Z-eicosatetraenoyl)-2-hexadecanoyl-sn-glycero-3-phosphocholine + H2O = 1-(5Z,8Z,11Z,14Z-eicosatetraenoyl)-sn-glycero-3-phosphocholine + hexadecanoate + H(+). The enzyme catalyses 1-O-hexadecyl-2-(5Z,8Z,11Z,14Z)-eicosatetraenoyl-sn-glycero-3-phosphocholine + H2O = 1-O-hexadecyl-sn-glycero-3-phosphocholine + (5Z,8Z,11Z,14Z)-eicosatetraenoate + H(+). It catalyses the reaction 1,2-di-(9Z-octadecenoyl)-sn-glycero-3-phospho-(1'-sn-glycerol) + H2O = 1-(9Z-octadecenoyl)-sn-glycero-3-phospho-(1'-sn-glycerol) + (9Z)-octadecenoate + H(+). It carries out the reaction 1-octadecanoyl-2-(5Z,8Z,11Z,14Z-eicosatetraenoyl)-sn-glycero-3-phosphate + H2O = 1-octadecanoyl-sn-glycero-3-phosphate + (5Z,8Z,11Z,14Z)-eicosatetraenoate + H(+). The catalysed reaction is 1-hexadecanoyl-sn-glycero-3-phosphocholine + H2O = sn-glycerol 3-phosphocholine + hexadecanoate + H(+). The enzyme catalyses 2-(prostaglandin E2)-sn-glycero-3-phosphoethanolamine + H2O = sn-glycero-3-phosphoethanolamine + prostaglandin E2 + H(+). It catalyses the reaction 2-[(15S)-hydroxy-(5Z,8Z,11Z,13E)-eicosatetraenoyl]-sn-glycero-3-phosphocholine + H2O = (15S)-hydroxy-(5Z,8Z,11Z,13E)-eicosatetraenoate + sn-glycerol 3-phosphocholine + H(+). It carries out the reaction 2-[(15R)-hydroxy-(5Z,8Z,11Z,13E)-eicosatetraenoyl]-sn-glycero-3-phosphocholine + H2O = (15R)-hydroxy-(5Z,8Z,11Z,13E)-eicosatetraenoate + sn-glycerol 3-phosphocholine + H(+). The catalysed reaction is 2-(prostaglandin E2)-sn-glycero-3-phosphocholine + H2O = prostaglandin E2 + sn-glycerol 3-phosphocholine + H(+). The enzyme catalyses 2-[(11R)-hydroxy-(5Z,8Z,12E,14Z)-eicosatetraenoyl]-sn-glycero-3-phosphocholine + H2O = (11R)-hydroxy-(5Z,8Z,12E,14Z)-eicosatetraenoate + sn-glycerol 3-phosphocholine + H(+). It catalyses the reaction 1-(5Z,8Z,11Z,14Z-eicosatetraenoyl)-2-O-hexadecyl-sn-glycero-3-phosphocholine + H2O = 2-O-hexadecyl-sn-glycero-3-phosphocholine + (5Z,8Z,11Z,14Z)-eicosatetraenoate + H(+). It carries out the reaction 1-octadecanoyl-2-(5Z,8Z,11Z,14Z-eicosatetraenoyl)-sn-glycero-3-phosphocholine + glycerol = 1-(5Z,8Z,11Z,14Z-eicosatetraenoyl)-glycerol + 1-octadecanoyl-sn-glycero-3-phosphocholine. The catalysed reaction is 1-octadecanoyl-2-(9Z,12Z,15Z-octadecatrienoyl)-sn-glycero-3-phosphocholine + glycerol = 1-(9Z,12Z,15Z-octadecatrienoyl)-glycerol + 1-octadecanoyl-sn-glycero-3-phosphocholine. It participates in membrane lipid metabolism; glycerophospholipid metabolism. The protein operates within lipid metabolism; arachidonate metabolism. It functions in the pathway lipid metabolism; prostaglandin biosynthesis. Its pathway is lipid metabolism; leukotriene B4 biosynthesis. Its activity is regulated as follows. Activated by cytosolic calcium, which is necessary for binding to membrane lipids. Activated by phosphorylation in response to mitogenic stimuli. Stimulated by agonists such as ATP and thrombin. Has primarily calcium-dependent phospholipase and lysophospholipase activities, with a major role in membrane lipid remodeling and biosynthesis of lipid mediators of the inflammatory response. Plays an important role in embryo implantation and parturition through its ability to trigger prostanoid production. Preferentially hydrolyzes the ester bond of the fatty acyl group attached at sn-2 position of phospholipids (phospholipase A2 activity). Selectively hydrolyzes sn-2 arachidonoyl group from membrane phospholipids, providing the precursor for eicosanoid biosynthesis via the cyclooxygenase pathway. In an alternative pathway of eicosanoid biosynthesis, hydrolyzes sn-2 fatty acyl chain of eicosanoid lysophopholipids to release free bioactive eicosanoids. Hydrolyzes the ester bond of the fatty acyl group attached at sn-1 position of phospholipids (phospholipase A1 activity) only if an ether linkage rather than an ester linkage is present at the sn-2 position. This hydrolysis is not stereospecific. Has calcium-independent phospholipase A2 and lysophospholipase activities in the presence of phosphoinositides. Has O-acyltransferase activity. Catalyzes the transfer of fatty acyl chains from phospholipids to a primary hydroxyl group of glycerol (sn-1 or sn-3), potentially contributing to monoacylglycerol synthesis. The chain is Cytosolic phospholipase A2 (Pla2g4a) from Mus musculus (Mouse).